Reading from the N-terminus, the 103-residue chain is MQGQKIRIRLKAFDYRLIDQSTQEIVDTAKRTGAQVRGPIPLPTKKERFTVLISPHVNKDARDQYEIRTHKRLLDIVEPTEKTVDALMKLDLAAGVDVQISLG.

It belongs to the universal ribosomal protein uS10 family. As to quaternary structure, part of the 30S ribosomal subunit.

Its function is as follows. Involved in the binding of tRNA to the ribosomes. This is Small ribosomal subunit protein uS10 from Hahella chejuensis (strain KCTC 2396).